Consider the following 857-residue polypeptide: MAFSAPTFSLANLLNGSYGVDTPEEVERVRSEQREEAAAACRNYRPLPAVDVSESVTEDAHSLRTPDGAPSEEVSVEFVTYGAEDYLEKSDDELSVAFETMVKPMRIGQLWCPAFNKCSFISSIAMARALLLAPRTSHRTMKGFEDLVAAIYTKSDFYYDEECEADDIQIDVSSRDVPGYSFEPWSRTSGFEPPPICEACDMIMYQCPCFDFNALKKSCAERTFADDYVIEGLDGVVDNATLLSNLGPFLVPVKCQYEKCPTPTVAIPPSLNRATDRVDINLVQSICDSTLPTHSNYDDSFHQVFVESADYSIDLDHVRLRQSDLIAKIPDSGHMIPVLSTGSGHKRVGTTKEVLTAIKKRNADVPELGDSVNLSRLSKAVAERFFISYINGNSLASSNFVNVVSNFHDYMEKWKSSGLSYDDLPDLHAENLQFYDHMIKSDVKPVVSDTLNIDRPVPATITYHKKGITSQFSPLFTALFERFQRCLRERIILPVGKISSLEMAGFDVKNKHCLEIDLSKFDKSQGEFHLMIQEHILNGLGCPAPITKWWCDFHRFSYIRDRRAGVGMPISFQRRTGDAFTYFGNTIVTMAEFAWCYDTDQFEKLLFSGDDSLGFSVLPPVGDPSKFTTLFNMEAKVMEPAVPYICSKFLLSDEFGNTFSVPDPLREVQRLGTKKIPYSDNDEFLFAHFMSFVDRLKFLDRMTQSCIDQLSLFFELKYRKSGAEAALMLGAFKKYTANFQSYKELYYSDRRQCELINSFSCVELRIERSSSTKQRKKKDGIERRRSDKRRTPTGSYGGGEKTETKVSHEESTGTRSQKSQREGAFKSQIVPLPTILSGGWSGTDRAPPCEHGGIIRI.

The RdRp catalytic domain maps to 511–624 (KHCLEIDLSK…FSVLPPVGDP (114 aa)). The disordered stretch occupies residues 772-857 (TKQRKKKDGI…PCEHGGIIRI (86 aa)). A compositionally biased stretch (basic and acidic residues) spans 800-812 (EKTETKVSHEEST).

This sequence belongs to the ssRNA positive-strand viruses RNA-directed RNA polymerase family. As to quaternary structure, interacts with replication protein 1a.

It catalyses the reaction RNA(n) + a ribonucleoside 5'-triphosphate = RNA(n+1) + diphosphate. Its function is as follows. RNA-dependent RNA polymerase which replicates the viral genome composed of 3 RNA segments, RNA1, RNA2 and RNA3. In Cucumis sativus (Cucumber), this protein is RNA-directed RNA polymerase 2a.